Reading from the N-terminus, the 182-residue chain is Large ribosomal subunit protein uL10 (182 aa).

This sequence belongs to the universal ribosomal protein uL10 family. In terms of assembly, part of the ribosomal stalk of the 50S ribosomal subunit. The N-terminus interacts with L11 and the large rRNA to form the base of the stalk. The C-terminus forms an elongated spine to which L12 dimers bind in a sequential fashion forming a multimeric L10(L12)X complex.

Functionally, forms part of the ribosomal stalk, playing a central role in the interaction of the ribosome with GTP-bound translation factors. The sequence is that of Large ribosomal subunit protein uL10 from Herminiimonas arsenicoxydans.